An 804-amino-acid chain; its full sequence is Protein translocase subunit SecA (804 aa).

ATP contacts are provided by residues Gln-87, 105–109 (GEGKT), and Asp-500.

This sequence belongs to the SecA family. Monomer and homodimer. Part of the essential Sec protein translocation apparatus which comprises SecA, SecYEG and auxiliary proteins SecDF-YajC and YidC.

Its subcellular location is the cell inner membrane. It localises to the cytoplasm. The enzyme catalyses ATP + H2O + cellular proteinSide 1 = ADP + phosphate + cellular proteinSide 2.. Its function is as follows. Part of the Sec protein translocase complex. Interacts with the SecYEG preprotein conducting channel. Has a central role in coupling the hydrolysis of ATP to the transfer of proteins into and across the cell membrane, serving both as a receptor for the preprotein-SecB complex and as an ATP-driven molecular motor driving the stepwise translocation of polypeptide chains across the membrane. The protein is Protein translocase subunit SecA of Neorickettsia sennetsu (strain ATCC VR-367 / Miyayama) (Ehrlichia sennetsu).